A 95-amino-acid chain; its full sequence is HssA/B-like protein 45 (95 aa).

The disordered stretch occupies residues 1 to 31; the sequence is MTLFSSISSISNPMTSSKSSIASFGSGTSMS.

It belongs to the hssA/B family.

This chain is HssA/B-like protein 45 (hssl45), found in Dictyostelium discoideum (Social amoeba).